A 502-amino-acid chain; its full sequence is Nucleoside transporter 2 (502 aa).

Residues 1-30 (MTTSSDSAMVNHTPSPWYKFGFKSFAEFNT) lie on the Cytoplasmic side of the membrane. The helical transmembrane segment at 31–51 (YVTFVFLGMSIMMVASAVTSA) threads the bilayer. Residues 52–81 (PDFLTRYYVYATGDPDAVAETPLFWNNANT) are Extracellular-facing. The helical transmembrane segment at 82–102 (FYNAGTYVLQVLTELFSLTPF) threads the bilayer. Residues 103–111 (MRRIPLSVR) are Cytoplasmic-facing. A helical membrane pass occupies residues 112–132 (LFVGLGIPFAELLLIIIVPAA). The Extracellular portion of the chain corresponds to 133–137 (TIKSQ). A helical membrane pass occupies residues 138–158 (HGAIAVIMVVACVGGFSKALC). Topologically, residues 159–178 (DSCTNALVGPFPTKFMNGAQ) are cytoplasmic. The helical transmembrane segment at 179–199 (WGLTVIALLMSIIQIILKVSM) threads the bilayer. The Extracellular segment spans residues 200–210 (GTSFHDILTMS). A helical transmembrane segment spans residues 211–231 (RIYFGICIGIQLFAIFELAIL). Residues 232-352 (RFNPFAQKYI…SVFKRVYPML (121 aa)) lie on the Cytoplasmic side of the membrane. The interval 252–273 (AQNNESTLEETAPSMNEPAAGD) is disordered. A helical transmembrane segment spans residues 353–373 (VCVFLIYFTSLLTFPGVFFLV). The Extracellular portion of the chain corresponds to 374 to 380 (STTSGWY). The chain crosses the membrane as a helical span at residues 381–401 (MTVIVTLFNAGDFISRMVLMF). At 402–408 (RPLRPSP) the chain is on the cytoplasmic side. The chain crosses the membrane as a helical span at residues 409–429 (KVVVAGTLGRLIIIPFLVLCV). The Extracellular segment spans residues 430–436 (RGIIRGE). The chain crosses the membrane as a helical span at residues 437 to 457 (ALPYVLITLLGLTNGYFGCMA). At 458–477 (CIHCPRTTTLRYAGERSLAA) the chain is on the cytoplasmic side. Residues 478 to 498 (MLSGISIMLGLCFGSNLSLAI) traverse the membrane as a helical segment. Residues 499 to 502 (TLTH) are Extracellular-facing.

Belongs to the SLC29A/ENT transporter (TC 2.A.57) family.

It is found in the cell membrane. The enzyme catalyses inosine(in) = inosine(out). It catalyses the reaction guanosine(in) = guanosine(out). Functionally, high affinity transporter for inosine and guanosine. This chain is Nucleoside transporter 2, found in Crithidia fasciculata.